The primary structure comprises 415 residues: Probable beta-1,4-xylosyltransferase IRX10L (415 aa).

A topological domain (cytoplasmic) is located at residue Met1. A helical; Signal-anchor for type II membrane protein transmembrane segment spans residues 2–22; it reads KLSSCVLIFLLCNTFSSISAF. Over 23–415 the chain is Lumenal; the sequence is RLSRSQPTER…AGPVADLKPW (393 aa). 2 N-linked (GlcNAc...) asparagine glycosylation sites follow: Asn142 and Asn403.

The protein belongs to the glycosyltransferase 47 family. Present in the xylem and phloem, and, to a lower extent, in interfascicular cells. Expressed in the root tip, shoot apical meristem (SAM), xylem cells of roots and stems, and in the vasculature of roots, cotyledons and leaves.

It is found in the golgi apparatus membrane. In terms of biological role, involved in the synthesis of the hemicellulose glucuronoxylan, a major component of secondary cell walls. Probably involved in the elongation of glucuronoxylan xylosyl backbone. This chain is Probable beta-1,4-xylosyltransferase IRX10L (IRX10L), found in Arabidopsis thaliana (Mouse-ear cress).